Here is a 34-residue protein sequence, read N- to C-terminus: Photosystem II reaction center protein T (34 aa).

The chain crosses the membrane as a helical span at residues serine 3–phenylalanine 23.

Belongs to the PsbT family. In terms of assembly, PSII is composed of 1 copy each of membrane proteins PsbA, PsbB, PsbC, PsbD, PsbE, PsbF, PsbH, PsbI, PsbJ, PsbK, PsbL, PsbM, PsbT, PsbX, PsbY, PsbZ, Psb30/Ycf12, peripheral proteins PsbO, CyanoQ (PsbQ), PsbU, PsbV and a large number of cofactors. It forms dimeric complexes.

The protein resides in the cellular thylakoid membrane. Its function is as follows. Found at the monomer-monomer interface of the photosystem II (PS II) dimer, plays a role in assembly and dimerization of PSII. PSII is a light-driven water plastoquinone oxidoreductase, using light energy to abstract electrons from H(2)O, generating a proton gradient subsequently used for ATP formation. The chain is Photosystem II reaction center protein T from Mastigocladus laminosus (Fischerella sp.).